A 506-amino-acid polypeptide reads, in one-letter code: MKYSLIAALPALAAASPTFSTETIHKQSAPVLSSTSAKEVPNSYMVVFKKHVKDASKHHDWVQSVHSKNTQERMELRKRSSDLPVSNEVFAGLKHTYELSGLKGYSGHFDDETLEAIRNHPDVDYIERDSEVRILGGDEPETENNSPWGLARISHRDSLSFGTWNKYLYAADGGEGVDVYVIDTGTNVDHVDFEGRAKWGKTIPNGDADEDGNGHGTHCSGTVAGKKYGVAKKAHVYAVKVLRSNGSGTMSDVVKGVEFAAKSHSEAVSAAKNGKKKGFKGSTANMSLGGGKSTTLDMAVNAAVDAGLHFAVAAGNDNADSCNYSPAAAENAVTVGASTLLDERAYFSNYGKCNDIFAPGLNILSTWIGSKHATNTISGTSMASPHIAGLLAYMLSLQPAKDSAYAVADITPKKLKANLIAIGTVGALSDVPSNTANVLAWNGGGSSNYTDIIEKGGYTVKKAASKEEEKESEFRITIPSLSELEDDFEKAKESAGRKAHHVGGKL.

The signal sequence occupies residues 1-15 (MKYSLIAALPALAAA). Residues 16–135 (SPTFSTETIH…IERDSEVRIL (120 aa)) constitute a propeptide, removed in mature form. Positions 43–134 (SYMVVFKKHV…YIERDSEVRI (92 aa)) constitute an Inhibitor I9 domain. Residues 59–79 (HDWVQSVHSKNTQERMELRKR) form a disordered region. Residues 69–79 (NTQERMELRKR) are compositionally biased toward basic and acidic residues. Positions 147-453 (PWGLARISHR…GGSSNYTDII (307 aa)) constitute a Peptidase S8 domain. Active-site charge relay system residues include D183 and H215. N-linked (GlcNAc...) asparagine glycans are attached at residues N245 and N285. The Charge relay system role is filled by S381. A glycan (N-linked (GlcNAc...) asparagine) is linked at N448. Residues 459 to 506 (TVKKAASKEEEKESEFRITIPSLSELEDDFEKAKESAGRKAHHVGGKL) constitute a propeptide, removed in mature form.

Belongs to the peptidase S8 family.

Functionally, serine protease. This is Subtilisin-like serine protease Cur l 4.0101 from Cochliobolus lunatus (Filamentous fungus).